A 282-amino-acid polypeptide reads, in one-letter code: Leucine-rich protein (282 aa).

Functionally, not essential for viability or growth. Nevertheless, uncontrolled production in E.coli is detrimental to the normal physiology of the bacteria. The polypeptide is Leucine-rich protein (lrp) (Streptococcus dysgalactiae subsp. equisimilis (Streptococcus equisimilis)).